The following is a 314-amino-acid chain: ATP synthase gamma chain (314 aa).

This sequence belongs to the ATPase gamma chain family. In terms of assembly, F-type ATPases have 2 components, CF(1) - the catalytic core - and CF(0) - the membrane proton channel. CF(1) has five subunits: alpha(3), beta(3), gamma(1), delta(1), epsilon(1). CF(0) has three main subunits: a, b and c.

Its subcellular location is the cell membrane. In terms of biological role, produces ATP from ADP in the presence of a proton gradient across the membrane. The gamma chain is believed to be important in regulating ATPase activity and the flow of protons through the CF(0) complex. This is ATP synthase gamma chain from Limosilactobacillus reuteri (strain DSM 20016) (Lactobacillus reuteri).